The primary structure comprises 491 residues: Ketol-acid reductoisomerase (NADP(+)) (491 aa).

The 194-residue stretch at 15–208 (AQLGKCRFMG…GGHRAGVLES (194 aa)) folds into the KARI N-terminal Rossmann domain. Residues 45–48 (CGAQ), Arg68, Arg76, Ser78, and 108–110 (DKQ) contribute to the NADP(+) site. His132 is a catalytic residue. Gly158 serves as a coordination point for NADP(+). KARI C-terminal knotted domains are found at residues 209–344 (SFVA…TAPQ) and 345–484 (YEGK…MTDM). The Mg(2+) site is built by Asp217, Glu221, Glu389, and Glu393. Ser414 provides a ligand contact to substrate.

The protein belongs to the ketol-acid reductoisomerase family. Mg(2+) serves as cofactor.

The enzyme catalyses (2R)-2,3-dihydroxy-3-methylbutanoate + NADP(+) = (2S)-2-acetolactate + NADPH + H(+). It carries out the reaction (2R,3R)-2,3-dihydroxy-3-methylpentanoate + NADP(+) = (S)-2-ethyl-2-hydroxy-3-oxobutanoate + NADPH + H(+). Its pathway is amino-acid biosynthesis; L-isoleucine biosynthesis; L-isoleucine from 2-oxobutanoate: step 2/4. The protein operates within amino-acid biosynthesis; L-valine biosynthesis; L-valine from pyruvate: step 2/4. Involved in the biosynthesis of branched-chain amino acids (BCAA). Catalyzes an alkyl-migration followed by a ketol-acid reduction of (S)-2-acetolactate (S2AL) to yield (R)-2,3-dihydroxy-isovalerate. In the isomerase reaction, S2AL is rearranged via a Mg-dependent methyl migration to produce 3-hydroxy-3-methyl-2-ketobutyrate (HMKB). In the reductase reaction, this 2-ketoacid undergoes a metal-dependent reduction by NADPH to yield (R)-2,3-dihydroxy-isovalerate. The protein is Ketol-acid reductoisomerase (NADP(+)) of Escherichia coli (strain 55989 / EAEC).